We begin with the raw amino-acid sequence, 215 residues long: Urease accessory protein UreG (215 aa).

24–31 (GPVGSGKT) contacts GTP.

It belongs to the SIMIBI class G3E GTPase family. UreG subfamily. As to quaternary structure, homodimer. UreD, UreF and UreG form a complex that acts as a GTP-hydrolysis-dependent molecular chaperone, activating the urease apoprotein by helping to assemble the nickel containing metallocenter of UreC. The UreE protein probably delivers the nickel.

It localises to the cytoplasm. Functionally, facilitates the functional incorporation of the urease nickel metallocenter. This process requires GTP hydrolysis, probably effectuated by UreG. The polypeptide is Urease accessory protein UreG (Burkholderia orbicola (strain MC0-3)).